The following is a 250-amino-acid chain: Peptidyl-tRNA hydrolase (250 aa).

Tyrosine 14 contributes to the tRNA binding site. Histidine 19 acts as the Proton acceptor in catalysis. TRNA contacts are provided by phenylalanine 64, asparagine 66, and asparagine 112. Residues 192 to 250 (MGDGNQRPGGVKTDPAQLEKAPPKAQSHIRQARQNQKKPNIPESGPMAEMLKKLLGKKD) are disordered. Residues 219–229 (HIRQARQNQKK) show a composition bias toward polar residues. Residues 241–250 (MLKKLLGKKD) show a composition bias toward basic and acidic residues.

This sequence belongs to the PTH family. Monomer.

It is found in the cytoplasm. The catalysed reaction is an N-acyl-L-alpha-aminoacyl-tRNA + H2O = an N-acyl-L-amino acid + a tRNA + H(+). Its function is as follows. Hydrolyzes ribosome-free peptidyl-tRNAs (with 1 or more amino acids incorporated), which drop off the ribosome during protein synthesis, or as a result of ribosome stalling. Functionally, catalyzes the release of premature peptidyl moieties from peptidyl-tRNA molecules trapped in stalled 50S ribosomal subunits, and thus maintains levels of free tRNAs and 50S ribosomes. This Brucella suis (strain ATCC 23445 / NCTC 10510) protein is Peptidyl-tRNA hydrolase.